Here is a 259-residue protein sequence, read N- to C-terminus: Type-2Aa cytolytic delta-endotoxin (259 aa).

The protein belongs to the cyt1/cyt2 endotoxin family. In terms of assembly, homodimer (protoxin) and monomer (active toxin). Post-translationally, active after proteolytic processing.

In terms of biological role, kills the larvae of dipteran insects by making pores in the epithelial cell membrane of the insect midgut. This is Type-2Aa cytolytic delta-endotoxin (cyt2Aa1) from Bacillus thuringiensis subsp. kyushuensis.